The sequence spans 105 residues: Probable tetrachloroethene reductive dehalogenase membrane anchor protein (105 aa).

Helical transmembrane passes span 3–23 (IYDV…QYGI), 35–55 (IPLQ…LAWG), and 66–86 (AIGM…IITY).

Belongs to the PceB family.

It is found in the cell membrane. Its function is as follows. May act as a membrane anchor for the tetrachloroethene reductive dehalogenase PceA. This chain is Probable tetrachloroethene reductive dehalogenase membrane anchor protein, found in Desulfitobacterium hafniense (Desulfitobacterium frappieri).